The chain runs to 671 residues: Probable serine/threonine-protein kinase DDB_G0286627 (671 aa).

Residues 31 to 283 form the Protein kinase domain; the sequence is WVIERQLSKG…SHQLIKHPFF (253 aa). ATP is bound by residues 37-45 and lysine 61; that span reads LSKGSFGQV. Aspartate 148 (proton acceptor) is an active-site residue. Residues 369 to 389 form a helical membrane-spanning segment; it reads FKIIYLFLILLFLMTILVNLN. Residues 410-523 form a disordered region; that stretch reads PESNPIKKPS…PPVTETPKPT (114 aa). Over residues 427 to 490 the composition is skewed to low complexity; the sequence is NQYSEGSQSS…PTDSSTTDPP (64 aa). A compositionally biased stretch (pro residues) spans 491–513; that stretch reads VTDPPITDPPITDPPVTDPPITE.

The protein belongs to the protein kinase superfamily. STE Ser/Thr protein kinase family. Requires Mg(2+) as cofactor.

It is found in the membrane. The catalysed reaction is L-seryl-[protein] + ATP = O-phospho-L-seryl-[protein] + ADP + H(+). The enzyme catalyses L-threonyl-[protein] + ATP = O-phospho-L-threonyl-[protein] + ADP + H(+). The sequence is that of Probable serine/threonine-protein kinase DDB_G0286627 from Dictyostelium discoideum (Social amoeba).